The primary structure comprises 571 residues: Proline--tRNA ligase (571 aa).

It belongs to the class-II aminoacyl-tRNA synthetase family. ProS type 1 subfamily. Homodimer.

The protein localises to the cytoplasm. The catalysed reaction is tRNA(Pro) + L-proline + ATP = L-prolyl-tRNA(Pro) + AMP + diphosphate. In terms of biological role, catalyzes the attachment of proline to tRNA(Pro) in a two-step reaction: proline is first activated by ATP to form Pro-AMP and then transferred to the acceptor end of tRNA(Pro). As ProRS can inadvertently accommodate and process non-cognate amino acids such as alanine and cysteine, to avoid such errors it has two additional distinct editing activities against alanine. One activity is designated as 'pretransfer' editing and involves the tRNA(Pro)-independent hydrolysis of activated Ala-AMP. The other activity is designated 'posttransfer' editing and involves deacylation of mischarged Ala-tRNA(Pro). The misacylated Cys-tRNA(Pro) is not edited by ProRS. This Stutzerimonas stutzeri (strain A1501) (Pseudomonas stutzeri) protein is Proline--tRNA ligase.